The primary structure comprises 206 residues: MSNESIKAEQDLIQEGVESEVSTAEASLIDELTQANFRIEELEQLLAEALAKVEEQKDSVIRAAAEVDNIRRRAAMDVEKANKFALEKFANELLPVLDNMERALMGTNPEDEATKSIYQGVELTQKSLLTAVAKFGVKQIDPQGQSFNPDQHQAIGMQPSAEFPANTVMLVMQKGYELNSRLLRPAMVMVSQGGPNQESATIDIEA.

This sequence belongs to the GrpE family. In terms of assembly, homodimer.

It localises to the cytoplasm. Participates actively in the response to hyperosmotic and heat shock by preventing the aggregation of stress-denatured proteins, in association with DnaK and GrpE. It is the nucleotide exchange factor for DnaK and may function as a thermosensor. Unfolded proteins bind initially to DnaJ; upon interaction with the DnaJ-bound protein, DnaK hydrolyzes its bound ATP, resulting in the formation of a stable complex. GrpE releases ADP from DnaK; ATP binding to DnaK triggers the release of the substrate protein, thus completing the reaction cycle. Several rounds of ATP-dependent interactions between DnaJ, DnaK and GrpE are required for fully efficient folding. This is Protein GrpE from Shewanella baltica (strain OS223).